Here is a 196-residue protein sequence, read N- to C-terminus: Holliday junction branch migration complex subunit RuvA (196 aa).

The interval Met1–Leu63 is domain I. Residues Asn64–Ser139 are domain II. Ser139 is a region of interest (flexible linker). Positions Ser139–Asn196 are domain III.

Belongs to the RuvA family. In terms of assembly, homotetramer. Forms an RuvA(8)-RuvB(12)-Holliday junction (HJ) complex. HJ DNA is sandwiched between 2 RuvA tetramers; dsDNA enters through RuvA and exits via RuvB. An RuvB hexamer assembles on each DNA strand where it exits the tetramer. Each RuvB hexamer is contacted by two RuvA subunits (via domain III) on 2 adjacent RuvB subunits; this complex drives branch migration. In the full resolvosome a probable DNA-RuvA(4)-RuvB(12)-RuvC(2) complex forms which resolves the HJ.

It is found in the cytoplasm. In terms of biological role, the RuvA-RuvB-RuvC complex processes Holliday junction (HJ) DNA during genetic recombination and DNA repair, while the RuvA-RuvB complex plays an important role in the rescue of blocked DNA replication forks via replication fork reversal (RFR). RuvA specifically binds to HJ cruciform DNA, conferring on it an open structure. The RuvB hexamer acts as an ATP-dependent pump, pulling dsDNA into and through the RuvAB complex. HJ branch migration allows RuvC to scan DNA until it finds its consensus sequence, where it cleaves and resolves the cruciform DNA. The polypeptide is Holliday junction branch migration complex subunit RuvA (Borrelia garinii subsp. bavariensis (strain ATCC BAA-2496 / DSM 23469 / PBi) (Borreliella bavariensis)).